Here is a 234-residue protein sequence, read N- to C-terminus: Large ribosomal subunit protein uL1 (234 aa).

The protein belongs to the universal ribosomal protein uL1 family. As to quaternary structure, part of the 50S ribosomal subunit.

Its function is as follows. Binds directly to 23S rRNA. The L1 stalk is quite mobile in the ribosome, and is involved in E site tRNA release. In terms of biological role, protein L1 is also a translational repressor protein, it controls the translation of the L11 operon by binding to its mRNA. In Sodalis glossinidius (strain morsitans), this protein is Large ribosomal subunit protein uL1.